Reading from the N-terminus, the 655-residue chain is Spastin (655 aa).

Over 1 to 58 (MLFDLINSFLKNGINNSNNNNNNNNNKNNFYNSLEDDDYLLNNQTTKVSLYLYFFIFA) the chain is Cytoplasmic. The helical intramembrane region spans 59–79 (FMFLVVDLIMLYYKHRENIES). Residues 80–655 (RETDLSLKLN…EKWNQKFGTI (576 aa)) are Cytoplasmic-facing. Positions 102–140 (KSSPTTSTTTTTITPTTTSSSQLRQPSTPKTTTKTINSP) are enriched in low complexity. The interval 102-151 (KSSPTTSTTTTTITPTTTSSSQLRQPSTPKTTTKTINSPPSTPKSPPPLP) is disordered. The span at 141–151 (PSTPKSPPPLP) shows a compositional bias: pro residues. One can recognise an MIT domain in the interval 169–232 (LNEAKSQIDS…KRAEYLKNEL (64 aa)). The segment at 261 to 325 (EQQQQQQQQS…TITSPGNKYG (65 aa)) is disordered. Over residues 262 to 320 (QQQQQQQQSSSTYRNSLNLSSSKSNSTINNRHSISSLSSLNSTTATTTTPSNTSTITSP) the composition is skewed to low complexity. 424-431 (GPPGNGKT) is a binding site for ATP.

This sequence belongs to the AAA ATPase family. Spastin subfamily. As to quaternary structure, homohexamer. The homohexamer is stabilized by ATP-binding. The homohexamer may adopt a ring conformation through which microtubules pass prior to being severed. Interacts with microtubules.

The protein localises to the membrane. It localises to the cytoplasm. It is found in the cytoskeleton. Its subcellular location is the microtubule organizing center. The protein resides in the centrosome. The enzyme catalyses n ATP + n H2O + a microtubule = n ADP + n phosphate + (n+1) alpha/beta tubulin heterodimers.. Its function is as follows. ATP-dependent microtubule severing protein. Microtubule severing may promote reorganization of cellular microtubule arrays and the release of microtubules from the microtubule organizing center following nucleation. The protein is Spastin of Dictyostelium discoideum (Social amoeba).